A 232-amino-acid chain; its full sequence is uncharacterized protein (232 aa).

This is an uncharacterized protein from Acanthamoeba polyphaga (Amoeba).